The sequence spans 270 residues: Formamidopyrimidine-DNA glycosylase (270 aa).

Pro2 serves as the catalytic Schiff-base intermediate with DNA. Residue Glu3 is the Proton donor of the active site. The active-site Proton donor; for beta-elimination activity is Lys58. DNA-binding residues include His91, Arg110, and Lys151. The segment at 236–270 (FVYGRGGQPCKVCGTTLREIKLGQRASVYCPKCQR) adopts an FPG-type zinc-finger fold. The active-site Proton donor; for delta-elimination activity is the Arg260.

The protein belongs to the FPG family. Monomer. Requires Zn(2+) as cofactor.

The catalysed reaction is Hydrolysis of DNA containing ring-opened 7-methylguanine residues, releasing 2,6-diamino-4-hydroxy-5-(N-methyl)formamidopyrimidine.. The enzyme catalyses 2'-deoxyribonucleotide-(2'-deoxyribose 5'-phosphate)-2'-deoxyribonucleotide-DNA = a 3'-end 2'-deoxyribonucleotide-(2,3-dehydro-2,3-deoxyribose 5'-phosphate)-DNA + a 5'-end 5'-phospho-2'-deoxyribonucleoside-DNA + H(+). Involved in base excision repair of DNA damaged by oxidation or by mutagenic agents. Acts as a DNA glycosylase that recognizes and removes damaged bases. Has a preference for oxidized purines, such as 7,8-dihydro-8-oxoguanine (8-oxoG). Has AP (apurinic/apyrimidinic) lyase activity and introduces nicks in the DNA strand. Cleaves the DNA backbone by beta-delta elimination to generate a single-strand break at the site of the removed base with both 3'- and 5'-phosphates. This Pseudomonas savastanoi pv. phaseolicola (strain 1448A / Race 6) (Pseudomonas syringae pv. phaseolicola (strain 1448A / Race 6)) protein is Formamidopyrimidine-DNA glycosylase.